Reading from the N-terminus, the 139-residue chain is Putative nickel-responsive regulator (139 aa).

Ni(2+) is bound by residues His79, His90, His92, and Cys98.

Belongs to the transcriptional regulatory CopG/NikR family. The cofactor is Ni(2+).

In terms of biological role, transcriptional regulator. The sequence is that of Putative nickel-responsive regulator from Pelobacter propionicus (strain DSM 2379 / NBRC 103807 / OttBd1).